The sequence spans 5386 residues: Nonribosomal peptide synthetase 2 (5386 aa).

Residues 45-435 (HDANAIDFLE…QGLLECLGRV (391 aa)) are adenylation 1. The region spanning 544 to 617 (SPKDPIGHSV…DLIEVCRESK (74 aa)) is the Carrier 1 domain. O-(pantetheine 4'-phosphoryl)serine is present on serine 578. Residues 652–1059 (LPCTPLQEAM…VDADRHVSAI (408 aa)) are condensation 1. The interval 1089-1482 (EKWAATDPHR…GRTDDQVKIR (394 aa)) is adenylation 2. A Carrier 2 domain is found at 1611-1688 (ELLSQWERDV…SLASLKKLQS (78 aa)). The residue at position 1648 (serine 1648) is an O-(pantetheine 4'-phosphoryl)serine. Positions 1731 to 2141 (ILPCTPLQEA…ALSADTDMFP (411 aa)) are condensation 2. Positions 2166-2551 (FERTALLHPD…GRLDDQVKIR (386 aa)) are adenylation 3. Positions 2652 to 2725 (SKTESEVRNI…DLAEHLDQIS (74 aa)) constitute a Carrier 3 domain. Serine 2686 carries the post-translational modification O-(pantetheine 4'-phosphoryl)serine. Residues 2763 to 3174 (RPCTPLQNGM…HSQIPLAKTD (412 aa)) are condensation 3. Positions 3202–3603 (EKTAQEHPQR…GRADDQVKLR (402 aa)) are adenylation 4. In terms of domain architecture, Carrier 4 spans 3728–3805 (EQWSKQEEKL…RLAKSLAANS (78 aa)). Position 3765 is an O-(pantetheine 4'-phosphoryl)serine (serine 3765). Residues 3846–4250 (LAPCTPLQQG…LDQAINDPSA (405 aa)) form a condensation 4 region. The region spanning 4281 to 4357 (FEWSDNAIAI…KMAQNMSMKN (77 aa)) is the Carrier 5 domain. Serine 4318 bears the O-(pantetheine 4'-phosphoryl)serine mark. The tract at residues 4391–4802 (EEILPLTPLQ…ERAEAPVIDM (412 aa)) is condensation 5. Residues 4821–4842 (HTGSGHVESGEDDGQDTPSTET) form a disordered region. Residues 4840–4913 (TETTNRIRKI…KMAKLADARA (74 aa)) form the Carrier 6 domain. Serine 4874 is subject to O-(pantetheine 4'-phosphoryl)serine. The condensation 6 stretch occupies residues 4952–5257 (QMLPVTAGQL…VQAHLRHLND (306 aa)).

This sequence belongs to the NRP synthetase family.

Its pathway is siderophore biosynthesis. Its function is as follows. Nonribosomal peptide synthetase; part of the gene cluster that mediates the biosynthesis of hydroxamate-containing siderophores that play a critical role in virulence. Cochliobolus heterostrophus produces extracellular coprogen-type siderophores including coprogen, neocoprogen I and neocoprogen II, as well as the intracellular siderophore ferricrocin. The role of extracellular siderophores is to supply iron to the fungus during plant infection, and the intracellular ferricrocin is required for intracellular iron distribution and storage with a crucial role in ascus and ascospore development. SIDA2 catalyzes the conversion of L-ornithine to N(5)-hydroxyornithine, the first step in the biosynthesis of all hydroxamate-containing siderophores. The assembly of extracellular coprogen-type siderophores is then performed by the nonribosomal peptide synthetase (NRPS) NPS6 whereas the intracellular siderophore ferricrocin is assembled by NPS2. This chain is Nonribosomal peptide synthetase 2, found in Cochliobolus heterostrophus (strain C4 / ATCC 48331 / race T) (Southern corn leaf blight fungus).